The primary structure comprises 213 residues: NADH dehydrogenase [ubiquinone] iron-sulfur protein 7, mitochondrial (213 aa).

Residues 1 to 38 (MAALSAPGLCGFRILGLRSSVGTAVQARGVHQSVATDG) constitute a mitochondrion transit peptide. The tract at residues 32 to 53 (QSVATDGPSSTQPALPKARAVA) is disordered. Residues 33–44 (SVATDGPSSTQP) show a composition bias toward polar residues. [4Fe-4S] cluster contacts are provided by cysteine 88 and cysteine 89. Arginine 111 carries the hydroxyarginine modification. The [4Fe-4S] cluster site is built by cysteine 153 and cysteine 183.

It belongs to the complex I 20 kDa subunit family. Core subunit of respiratory chain NADH dehydrogenase (Complex I) which is composed of 45 different subunits. This is a component of the iron-sulfur (IP) fragment of the enzyme. It depends on [4Fe-4S] cluster as a cofactor. In terms of processing, hydroxylated ar Arg-111 by NDUFAF5 early in the pathway of assembly of complex I, before the formation of the juncture between peripheral and membrane arms.

It localises to the mitochondrion inner membrane. It catalyses the reaction a ubiquinone + NADH + 5 H(+)(in) = a ubiquinol + NAD(+) + 4 H(+)(out). Its function is as follows. Core subunit of the mitochondrial membrane respiratory chain NADH dehydrogenase (Complex I) which catalyzes electron transfer from NADH through the respiratory chain, using ubiquinone as an electron acceptor. Essential for the catalytic activity of complex I. The sequence is that of NADH dehydrogenase [ubiquinone] iron-sulfur protein 7, mitochondrial (NDUFS7) from Gorilla gorilla gorilla (Western lowland gorilla).